The chain runs to 1034 residues: Integrin alpha-V (1034 aa).

The first 19 residues, 1–19 (MAALRASLLLSCALTAARA), serve as a signal peptide directing secretion. Residues 20–978 (FNLDAERPAV…WGIQPQPMPV (959 aa)) lie on the Extracellular side of the membrane. 7 FG-GAP repeats span residues 21–86 (NLDA…RNCQ), 97–158 (DFAP…VEYA), 161–213 (RSTT…LAKY), 225–279 (QLAT…GKNM), 280–345 (SSMY…GGFQ), 346–403 (IAKL…GLNA), and 407–470 (RILE…VNPT). Asn-62 is a glycosylation site (N-linked (GlcNAc...) asparagine). Disulfide bonds link Cys-77–Cys-85, Cys-126–Cys-146, and Cys-160–Cys-173. The Ca(2+) site is built by Asp-248, Asp-252, Ile-254, and Asp-256. Asn-278 and Asn-284 each carry an N-linked (GlcNAc...) asparagine glycan. Residues Asp-302, Asn-304, Asp-306, Tyr-308, Asp-310, Asp-367, Asp-369, Asp-371, Phe-373, Asp-375, Asp-431, Asp-433, Asn-435, Tyr-437, and Asp-439 each contribute to the Ca(2+) site. Disulfide bonds link Cys-479/Cys-488 and Cys-494/Cys-551. N-linked (GlcNAc...) asparagine glycosylation is found at Asn-540 and Asn-601. 2 cysteine pairs are disulfide-bonded: Cys-612-Cys-618 and Cys-684-Cys-697. N-linked (GlcNAc...) asparagine glycosylation is found at Asn-690, Asn-821, Asn-837, and Asn-860. Disulfide bonds link Cys-838/Cys-900 and Cys-890/Cys-895. 4 N-linked (GlcNAc...) asparagine glycosylation sites follow: Asn-931, Asn-951, Asn-959, and Asn-966. Residues 979 to 1002 (PVWVIILAVLAGLLLLAVLVLVMY) traverse the membrane as a helical segment. The Cytoplasmic segment spans residues 1003–1034 (RMGFFKRVRPPQEEQEREQLQPHENGEGTSEA). The GFFKR motif signature appears at 1005–1009 (GFFKR). A compositionally biased stretch (basic and acidic residues) spans 1013 to 1028 (PQEEQEREQLQPHENG). The tract at residues 1013–1034 (PQEEQEREQLQPHENGEGTSEA) is disordered.

This sequence belongs to the integrin alpha chain family. Heterodimer of an alpha and a beta subunit. The alpha subunit is composed of a heavy and a light chain linked by a disulfide bond. Alpha-V (ITGAV) associates with either beta-1 (ITGB1), beta-3 (ITGB3), beta-5 (ITGB5), beta-6 (ITGB6) or beta-8 (ITGB8). Interacts with RAB25. Interacts with CIB1. Integrins ITGAV:ITGB3 and ITGAV:ITGB5 interact with FBLN5 (via N-terminus). ITGAV:ITGB3 and ITGAV:ITGB5 interact with CCN3. ITGAV:ITGB3 interacts with ADGRA2. ITGAV:ITGB3 interacts with FGF2; it is likely that FGF2 can simultaneously bind ITGAV:ITGB3 and FGF receptors. ITGAV:ITGB3 is found in a ternary complex with CX3CR1 and CX3CL1. ITGAV:ITGB3 is found in a ternary complex with NRG1 and ERBB3. ITGAV:ITGB3 is found in a ternary complex with FGF1 and FGFR1. ITGAV:ITGB3 is found in a ternary complex with IGF1 and IGF1R. ITGAV:ITGB3 interacts with IGF2. ITGAV:ITGB3 and ITGAV:ITGB6 interact with FBN1. ITGAV:ITGB3 interacts with CD9, CD81 and CD151 (via second extracellular domain). ITGAV:ITGB6 interacts with TGFB1.

Its subcellular location is the membrane. It localises to the cell junction. The protein resides in the focal adhesion. The alpha-V (ITGAV) integrins are receptors for vitronectin, cytotactin, fibronectin, fibrinogen, laminin, matrix metalloproteinase-2, osteopontin, osteomodulin, prothrombin, thrombospondin, TGFB1 and vWF. They recognize the sequence R-G-D in a wide array of ligands. Alpha-V integrins may play a role in embryo implantation, angiogenesis and wound healing. ITGAV:ITGB3 binds to fractalkine (CX3CL1) and may act as its coreceptor in CX3CR1-dependent fractalkine signaling. ITGAV:ITGB3 binds to NRG1 (via EGF domain) and this binding is essential for NRG1-ERBB signaling. ITGAV:ITGB3 binds to FGF1 and this binding is essential for FGF1 signaling. ITGAV:ITGB3 binds to FGF2 and this binding is essential for FGF2 signaling. ITGAV:ITGB3 binds to IGF1 and this binding is essential for IGF1 signaling. ITGAV:ITGB3 binds to IGF2 and this binding is essential for IGF2 signaling. ITGAV:ITGB3 binds to IL1B and this binding is essential for IL1B signaling. ITGAV:ITGB3 binds to PLA2G2A via a site (site 2) which is distinct from the classical ligand-binding site (site 1) and this induces integrin conformational changes and enhanced ligand binding to site 1. ITGAV:ITGB3 and ITGAV:ITGB6 act as receptors for fibrillin-1 (FBN1) and mediate R-G-D-dependent cell adhesion to FBN1. Integrin alpha-V/beta-6 or alpha-V/beta-8 (ITGAV:ITGB6 or ITGAV:ITGB8) mediates R-G-D-dependent release of transforming growth factor beta-1 (TGF-beta-1) from regulatory Latency-associated peptide (LAP), thereby playing a key role in TGF-beta-1 activation. ITGAV:ITGB3 acts as a receptor for CD40LG. ITGAV:ITGB3 acts as a receptor for IBSP and promotes cell adhesion and migration to IBSP. The chain is Integrin alpha-V (ITGAV) from Gallus gallus (Chicken).